Consider the following 386-residue polypeptide: MDSSYSDSRPMFVQSPYGGWNQTQMIDSMANPMNNEQGDLHSLSESQSQSQPSQQLQPALKRPRLVDDNLFNPASSFPQPSSSNPWMVPSLNPPPVNKGTANIFYKTRMCAKFRAGTCRNGELCNFAHGIEDLRQPPSNWQEIVGPPPAGQDRERERERERERERPSLAPVVNNNWEDDQKIILRMKLCRKFCFGEECPYGDRCNFIHEDLSKFREDSGKLRESSVISVGATAADQPSDTASNLIEVNRQGSIPVPAPMNNGGVVKTVYWKTRLCMKFDITGQCPFGDKCHFAHGQAELHNSVGRVEGEAMNAVASVNKQAVVPANEAFAMKPITQVTADSSGLNEEGRRKKCLLKWSDSKKINRIYGDWIDDLPVGQKSTKPVES.

Positions 1 to 90 (MDSSYSDSRP…SSSNPWMVPS (90 aa)) are disordered. Residues 20–37 (WNQTQMIDSMANPMNNEQ) show a composition bias toward polar residues. Positions 43–58 (LSESQSQSQPSQQLQP) are enriched in low complexity. Polar residues predominate over residues 72 to 85 (NPASSFPQPSSSNP). The C3H1-type 1 zinc finger occupies 104–131 (FYKTRMCAKFRAGTCRNGELCNFAHGIE). Positions 136 to 166 (PPSNWQEIVGPPPAGQDRERERERERERERP) are disordered. The span at 151–166 (QDRERERERERERERP) shows a compositional bias: basic and acidic residues. 2 consecutive C3H1-type zinc fingers follow at residues 183–211 (ILRMKLCRKFCFGEECPYGDRCNFIHEDL) and 269–297 (YWKTRLCMKFDITGQCPFGDKCHFAHGQA).

This chain is Zinc finger CCCH domain-containing protein 39, found in Arabidopsis thaliana (Mouse-ear cress).